A 614-amino-acid chain; its full sequence is Kelch-like protein 40 (614 aa).

One can recognise a BTB domain in the interval 33–100 (IDCVLKIQGK…IYTSEIEITE (68 aa)). The BACK domain maps to 135-237 (CLAIFRLGLL…PQDYIKNKVE (103 aa)). Kelch repeat units lie at residues 353–405 (QLFV…ESEN), 406–455 (SIYL…SHDN), 456–503 (LVYV…VHKG), 504–550 (KIFI…SMNG), and 552–606 (LYAI…AARL).

Belongs to the KLHL40 family. In terms of assembly, component of the BCR(KLHL40) E3 ubiquitin ligase complex.

The protein localises to the cytoplasm. It is found in the myofibril. The protein resides in the sarcomere. Its subcellular location is the a band. It localises to the i band. Its function is as follows. Substrate-specific adapter of a BCR (BTB-CUL3-RBX1) E3 ubiquitin ligase complex that acts as a key regulator of skeletal muscle development. This chain is Kelch-like protein 40 (klhl40), found in Xenopus laevis (African clawed frog).